Reading from the N-terminus, the 634-residue chain is DNA gyrase subunit B (634 aa).

A Toprim domain is found at 416-530; that stretch reads REIYIVEGDS…NGHVYIAMPP (115 aa). The Mg(2+) site is built by Glu-422, Asp-495, and Asp-497.

The protein belongs to the type II topoisomerase GyrB family. Heterotetramer, composed of two GyrA and two GyrB chains. In the heterotetramer, GyrA contains the active site tyrosine that forms a transient covalent intermediate with DNA, while GyrB binds cofactors and catalyzes ATP hydrolysis. It depends on Mg(2+) as a cofactor. Requires Mn(2+) as cofactor. Ca(2+) serves as cofactor.

It localises to the cytoplasm. The catalysed reaction is ATP-dependent breakage, passage and rejoining of double-stranded DNA.. In terms of biological role, a type II topoisomerase that negatively supercoils closed circular double-stranded (ds) DNA in an ATP-dependent manner to modulate DNA topology and maintain chromosomes in an underwound state. Negative supercoiling favors strand separation, and DNA replication, transcription, recombination and repair, all of which involve strand separation. Also able to catalyze the interconversion of other topological isomers of dsDNA rings, including catenanes and knotted rings. Type II topoisomerases break and join 2 DNA strands simultaneously in an ATP-dependent manner. The sequence is that of DNA gyrase subunit B from Borrelia hermsii.